Here is a 364-residue protein sequence, read N- to C-terminus: tRNA-specific 2-thiouridylase MnmA 1 (364 aa).

Residues 10–17 (GMSGGVDS) and M36 contribute to the ATP site. C106 (nucleophile) is an active-site residue. A disulfide bond links C106 and C204. Residue G130 coordinates ATP. Residues 154-156 (KDQ) are interaction with tRNA. Residue C204 is the Cysteine persulfide intermediate of the active site. The interval 310–311 (RY) is interaction with tRNA.

It belongs to the MnmA/TRMU family.

The protein resides in the cytoplasm. It catalyses the reaction S-sulfanyl-L-cysteinyl-[protein] + uridine(34) in tRNA + AH2 + ATP = 2-thiouridine(34) in tRNA + L-cysteinyl-[protein] + A + AMP + diphosphate + H(+). In terms of biological role, catalyzes the 2-thiolation of uridine at the wobble position (U34) of tRNA, leading to the formation of s(2)U34. The polypeptide is tRNA-specific 2-thiouridylase MnmA 1 (Thermoanaerobacter sp. (strain X514)).